Reading from the N-terminus, the 60-residue chain is Large ribosomal subunit protein uL30 (60 aa).

Belongs to the universal ribosomal protein uL30 family. Part of the 50S ribosomal subunit.

The chain is Large ribosomal subunit protein uL30 from Baumannia cicadellinicola subsp. Homalodisca coagulata.